Consider the following 537-residue polypeptide: MKQTGPYISKNGADKSGFKNLAATHWNYRPAALYEEAIRRGEGHVAANGPFVVKTGVHTGRSAKDKFIVRDASTEKTVWWDNNKSMTPEAFDLLHADMLKHAEGKELFIQDLFGGADQTHRLATRIYTEYAWHSLFIQNLLIEPKPEELGSFDPQFTIIDLPSFEADPEKYGVRTGTVIACNFAKRIVLIAGTSYAGEIKKSVFSMLNYELPPKRVMPMHCSANVGEEGDTAIFFGLSGTGKTTLSAVATRTLIGDDEHGWSENGVFNFEGGCYAKMIKLSAEAEPEIYAVTRRFGTVLENVVMDENTRELDLDSAALAENSRGAYPLSFIPNASATGRAPHPKNIIMLTADAFSVLPPVARLTPSQAMYHFLSGYTAKVAGTEKGVTEPEATFSTCFGAPFMSRHPTEYGNLLRDLIAQHKVSCWLVNTGWTGGVYGTGNRMPIKATRALLAAALDGSLNNVEFRTDPNFGFEVPVDVPGVDNKILNPRETWADKAAYDAQAQKLVKMFIENFAKFEAHVDPDVRAAAPAAARAAE.

Residues arginine 61, tyrosine 195, and lysine 201 each coordinate substrate. Residues lysine 201, histidine 220, and 236-244 (GLSGTGKTT) each bind ATP. Mn(2+) contacts are provided by lysine 201 and histidine 220. Aspartate 257 serves as a coordination point for Mn(2+). 3 residues coordinate ATP: glutamate 285, arginine 323, and threonine 448. Residue arginine 323 coordinates substrate.

Belongs to the phosphoenolpyruvate carboxykinase (ATP) family. The cofactor is Mn(2+).

It localises to the cytoplasm. It catalyses the reaction oxaloacetate + ATP = phosphoenolpyruvate + ADP + CO2. Its pathway is carbohydrate biosynthesis; gluconeogenesis. In terms of biological role, involved in the gluconeogenesis. Catalyzes the conversion of oxaloacetate (OAA) to phosphoenolpyruvate (PEP) through direct phosphoryl transfer between the nucleoside triphosphate and OAA. The sequence is that of Phosphoenolpyruvate carboxykinase (ATP) from Parvibaculum lavamentivorans (strain DS-1 / DSM 13023 / NCIMB 13966).